Here is a 362-residue protein sequence, read N- to C-terminus: Zinc transporter 9 (362 aa).

A signal peptide spans 1–21 (MAFDLKLTACLLLAVFSLAAA). Topologically, residues 22–42 (ADCECQPSDEGHDAAKSRTLK) are extracellular. Residues 43 to 63 (VIAIFCILVGSSAGCAIPSLG) form a helical membrane-spanning segment. The Cytoplasmic segment spans residues 64–74 (RRFPALRPDTS). A helical transmembrane segment spans residues 75-95 (LFFALKAFAAGVILATAFVHI). Over 96–120 (LPVSFDKLGSPCLVDGPWRKYPFTG) the chain is Extracellular. The helical transmembrane segment at 121–141 (LVAMLAAVATLLLDTIATGYF) threads the bilayer. Residues 142–207 (LQRAQDSRGA…EDRAKLVRHR (66 aa)) lie on the Cytoplasmic side of the membrane. A helical transmembrane segment spans residues 208-228 (VISQVFELGIIVHSIIIGISL). Topologically, residues 229–239 (GASESPSTIRP) are extracellular. The helical transmembrane segment at 240-260 (LVAALTFHQFFEGIGLGGCIV) threads the bilayer. Topologically, residues 261 to 269 (QARFHLKSA) are cytoplasmic. The helical transmembrane segment at 270–290 (VTMAIFFSLTTPVGIMIGIGI) threads the bilayer. Over 291-301 (SSAYNENSPTA) the chain is Extracellular. Residues 302-322 (LIVEGILDAAAAGILNYMALV) form a helical membrane-spanning segment. Topologically, residues 323 to 341 (DLLAEDFMNPRVRKSGRLQ) are cytoplasmic. The helical transmembrane segment at 342–362 (LIISILLLVGIALMSLLGIWA) threads the bilayer.

The protein belongs to the ZIP transporter (TC 2.A.5) family.

It is found in the cell membrane. Zinc transporter that may be involved in zinc uptake from the rhizosphere. This Oryza sativa subsp. japonica (Rice) protein is Zinc transporter 9 (ZIP9).